We begin with the raw amino-acid sequence, 74 residues long: Kappa-scoloptoxin(03)-Ssm1a (74 aa).

Residues 1-23 (MNSSIAILLVMALIMFSLDKSYS) form the signal peptide. Cystine bridges form between cysteine 32–cysteine 59, cysteine 42–cysteine 58, and cysteine 45–cysteine 68.

This sequence belongs to the scoloptoxin-03 family. As to expression, expressed by the venom gland.

It is found in the secreted. Functionally, this toxin inhibits voltage-gated potassium channel currents in DRG neurons (IC(50)=44.2 nM). In vivo, insects injected with this toxin showed signs of neurotoxicity including twitching, paralysis, and body contraction. This Scolopendra mutilans (Chinese red-headed centipede) protein is Kappa-scoloptoxin(03)-Ssm1a.